Reading from the N-terminus, the 206-residue chain is Small ribosomal subunit protein uS4 (206 aa).

One can recognise an S4 RNA-binding domain in the interval 96-156; it reads TRLDNVVYRM…EKSKKQARII (61 aa).

This sequence belongs to the universal ribosomal protein uS4 family. In terms of assembly, part of the 30S ribosomal subunit. Contacts protein S5. The interaction surface between S4 and S5 is involved in control of translational fidelity.

In terms of biological role, one of the primary rRNA binding proteins, it binds directly to 16S rRNA where it nucleates assembly of the body of the 30S subunit. Its function is as follows. With S5 and S12 plays an important role in translational accuracy. In Shewanella woodyi (strain ATCC 51908 / MS32), this protein is Small ribosomal subunit protein uS4.